Consider the following 657-residue polypeptide: Translation factor GUF1, mitochondrial (657 aa).

Residues 1 to 39 (MRGCLQSVKWLTSALRPSQSLASSTRYPRRLLSTSAPRN) constitute a mitochondrion transit peptide. In terms of domain architecture, tr-type G spans 59 to 239 (ERFRNFCIVA…TVIEQIPAPV (181 aa)). GTP-binding positions include 121–128 (HQGEDYLL), 185–189 (INKVD), and 239–242 (VGDR).

It belongs to the TRAFAC class translation factor GTPase superfamily. Classic translation factor GTPase family. LepA subfamily.

It localises to the mitochondrion inner membrane. The enzyme catalyses GTP + H2O = GDP + phosphate + H(+). Functionally, promotes mitochondrial protein synthesis. May act as a fidelity factor of the translation reaction, by catalyzing a one-codon backward translocation of tRNAs on improperly translocated ribosomes. Binds to mitochondrial ribosomes in a GTP-dependent manner. The protein is Translation factor GUF1, mitochondrial of Ajellomyces capsulatus (strain H143) (Darling's disease fungus).